We begin with the raw amino-acid sequence, 130 residues long: Small ribosomal subunit protein uS11 (130 aa).

The protein belongs to the universal ribosomal protein uS11 family. In terms of assembly, part of the 30S ribosomal subunit. Interacts with proteins S7 and S18. Binds to IF-3.

In terms of biological role, located on the platform of the 30S subunit, it bridges several disparate RNA helices of the 16S rRNA. Forms part of the Shine-Dalgarno cleft in the 70S ribosome. The sequence is that of Small ribosomal subunit protein uS11 from Gluconobacter oxydans (strain 621H) (Gluconobacter suboxydans).